We begin with the raw amino-acid sequence, 195 residues long: Protein GrpE (195 aa).

Positions methionine 1 to lysine 14 are enriched in basic and acidic residues. The interval methionine 1 to leucine 45 is disordered.

Belongs to the GrpE family. As to quaternary structure, homodimer.

The protein resides in the cytoplasm. Its function is as follows. Participates actively in the response to hyperosmotic and heat shock by preventing the aggregation of stress-denatured proteins, in association with DnaK and GrpE. It is the nucleotide exchange factor for DnaK and may function as a thermosensor. Unfolded proteins bind initially to DnaJ; upon interaction with the DnaJ-bound protein, DnaK hydrolyzes its bound ATP, resulting in the formation of a stable complex. GrpE releases ADP from DnaK; ATP binding to DnaK triggers the release of the substrate protein, thus completing the reaction cycle. Several rounds of ATP-dependent interactions between DnaJ, DnaK and GrpE are required for fully efficient folding. In Nitrosomonas europaea (strain ATCC 19718 / CIP 103999 / KCTC 2705 / NBRC 14298), this protein is Protein GrpE.